Consider the following 508-residue polypeptide: Lysine--tRNA ligase (508 aa).

Residues glutamate 418 and glutamate 425 each coordinate Mg(2+).

This sequence belongs to the class-II aminoacyl-tRNA synthetase family. In terms of assembly, homodimer. Requires Mg(2+) as cofactor.

Its subcellular location is the cytoplasm. It carries out the reaction tRNA(Lys) + L-lysine + ATP = L-lysyl-tRNA(Lys) + AMP + diphosphate. This Burkholderia pseudomallei (strain 668) protein is Lysine--tRNA ligase.